The following is a 146-amino-acid chain: Snaclec stejaggregin-B subunit beta-1 (146 aa).

The first 23 residues, 1–23 (MGRFIFVSFGLLVVFLSLSGTGA), serve as a signal peptide directing secretion. Cystine bridges form between C25/C36, C53/C142, and C119/C134. The C-type lectin domain maps to 32–143 (YDLYCYRVFQ…CSQTYPFVCK (112 aa)).

It belongs to the snaclec family. Heteromultimer; disulfide-linked. As to expression, expressed by the venom gland.

The protein resides in the secreted. In terms of biological role, interferes with one step of hemostasis (modulation of platelet aggregation, or coagulation cascade, for example). The sequence is that of Snaclec stejaggregin-B subunit beta-1 from Trimeresurus stejnegeri (Chinese green tree viper).